Consider the following 82-residue polypeptide: Small ribosomal subunit protein uS17 (82 aa).

Belongs to the universal ribosomal protein uS17 family. In terms of assembly, part of the 30S ribosomal subunit.

Functionally, one of the primary rRNA binding proteins, it binds specifically to the 5'-end of 16S ribosomal RNA. The sequence is that of Small ribosomal subunit protein uS17 from Rhodopseudomonas palustris (strain HaA2).